The chain runs to 311 residues: Bifunctional protein FolD (311 aa).

174-176 (GKG) is a binding site for NADP(+).

The protein belongs to the tetrahydrofolate dehydrogenase/cyclohydrolase family. As to quaternary structure, homodimer.

It carries out the reaction (6R)-5,10-methylene-5,6,7,8-tetrahydrofolate + NADP(+) = (6R)-5,10-methenyltetrahydrofolate + NADPH. The catalysed reaction is (6R)-5,10-methenyltetrahydrofolate + H2O = (6R)-10-formyltetrahydrofolate + H(+). Its pathway is one-carbon metabolism; tetrahydrofolate interconversion. Catalyzes the oxidation of 5,10-methylenetetrahydrofolate to 5,10-methenyltetrahydrofolate and then the hydrolysis of 5,10-methenyltetrahydrofolate to 10-formyltetrahydrofolate. This Pyrobaculum neutrophilum (strain DSM 2338 / JCM 9278 / NBRC 100436 / V24Sta) (Thermoproteus neutrophilus) protein is Bifunctional protein FolD.